Here is a 174-residue protein sequence, read N- to C-terminus: Acetolactate synthase small subunit (174 aa).

The 75-residue stretch at 4–78 folds into the ACT domain; it reads TLSVLVQDEA…NILNVQDVTN (75 aa).

Belongs to the acetolactate synthase small subunit family. Dimer of large and small chains.

The protein resides in the plastid. It is found in the chloroplast. It catalyses the reaction 2 pyruvate + H(+) = (2S)-2-acetolactate + CO2. Its pathway is amino-acid biosynthesis; L-isoleucine biosynthesis; L-isoleucine from 2-oxobutanoate: step 1/4. It participates in amino-acid biosynthesis; L-valine biosynthesis; L-valine from pyruvate: step 1/4. The protein is Acetolactate synthase small subunit (ilvH) of Pyropia yezoensis (Susabi-nori).